A 729-amino-acid polypeptide reads, in one-letter code: Fatty acid oxidation complex subunit alpha (729 aa).

Residues 1-189 form an enoyl-CoA hydratase/isomerase region; sequence MLYKGDTLYL…KIGLVDGVVK (189 aa). Substrate is bound at residue Asp296. A 3-hydroxyacyl-CoA dehydrogenase region spans residues 311–729; that stretch reads ETPKQAAVLG…ARPVGDLKTA (419 aa). NAD(+) is bound by residues Met324, Asp343, 400–402, Lys407, and Ser429; that span reads VVE. Residue His450 is the For 3-hydroxyacyl-CoA dehydrogenase activity of the active site. Position 453 (Asn453) interacts with NAD(+). Residues Asn500 and Tyr660 each contribute to the substrate site. Positions 708–729 are disordered; that stretch reads RHNEPYYPPVEPARPVGDLKTA.

It in the N-terminal section; belongs to the enoyl-CoA hydratase/isomerase family. In the C-terminal section; belongs to the 3-hydroxyacyl-CoA dehydrogenase family. Heterotetramer of two alpha chains (FadB) and two beta chains (FadA).

The catalysed reaction is a (3S)-3-hydroxyacyl-CoA + NAD(+) = a 3-oxoacyl-CoA + NADH + H(+). It carries out the reaction a (3S)-3-hydroxyacyl-CoA = a (2E)-enoyl-CoA + H2O. The enzyme catalyses a 4-saturated-(3S)-3-hydroxyacyl-CoA = a (3E)-enoyl-CoA + H2O. It catalyses the reaction (3S)-3-hydroxybutanoyl-CoA = (3R)-3-hydroxybutanoyl-CoA. The catalysed reaction is a (3Z)-enoyl-CoA = a 4-saturated (2E)-enoyl-CoA. It carries out the reaction a (3E)-enoyl-CoA = a 4-saturated (2E)-enoyl-CoA. It participates in lipid metabolism; fatty acid beta-oxidation. Its function is as follows. Involved in the aerobic and anaerobic degradation of long-chain fatty acids via beta-oxidation cycle. Catalyzes the formation of 3-oxoacyl-CoA from enoyl-CoA via L-3-hydroxyacyl-CoA. It can also use D-3-hydroxyacyl-CoA and cis-3-enoyl-CoA as substrate. The protein is Fatty acid oxidation complex subunit alpha of Escherichia coli O7:K1 (strain IAI39 / ExPEC).